The sequence spans 1093 residues: Semaphorin-5B (1093 aa).

An N-terminal signal peptide occupies residues 1-19 (MVVPGPLALSLLLSSLTLL). The Extracellular segment spans residues 20 to 978 (VSHLSSSQDI…TSCGGFNLIH (959 aa)). The Sema domain occupies 45–495 (HPIVAFEDLK…LSDRVLRVPL (451 aa)). N-linked (GlcNAc...) asparagine glycans are attached at residues Asn-59 and Asn-95. 2 disulfides stabilise this stretch: Cys-114–Cys-124 and Cys-141–Cys-150. Residues Asn-157, Asn-178, and Asn-287 are each glycosylated (N-linked (GlcNAc...) asparagine). 2 cysteine pairs are disulfide-bonded: Cys-264/Cys-367 and Cys-288/Cys-330. N-linked (GlcNAc...) asparagine glycans are attached at residues Asn-333, Asn-378, Asn-532, Asn-539, Asn-547, and Asn-602. TSP type-1 domains lie at 551–605 (DGGF…NCSR), 606–662 (NGAW…TPCP), 664–713 (PIFW…EACP), 721–776 (WTPW…ACDT), 795–850 (NGGW…QACP), 852–907 (RGAW…QACP), and 908–952 (EGWS…RPCP). Disulfide bonds link Cys-618–Cys-655, Cys-622–Cys-661, Cys-633–Cys-645, Cys-676–Cys-707, Cys-680–Cys-712, and Cys-691–Cys-697. The N-linked (GlcNAc...) asparagine glycan is linked to Asn-728. Cystine bridges form between Cys-807-Cys-844, Cys-811-Cys-849, Cys-822-Cys-834, Cys-864-Cys-901, Cys-868-Cys-906, and Cys-879-Cys-891. A glycan (N-linked (GlcNAc...) asparagine) is linked at Asn-944. A helical transmembrane segment spans residues 979-999 (LIVTGVSCFLVSGLLTLAVYL). Topologically, residues 1000–1093 (SCQHCQRQSQ…SPGQRCFPNS (94 aa)) are cytoplasmic.

The protein belongs to the semaphorin family. In adult, only detected in brain.

Its subcellular location is the membrane. May act as a positive axonal guidance cue. In Mus musculus (Mouse), this protein is Semaphorin-5B (Sema5b).